Here is a 216-residue protein sequence, read N- to C-terminus: Acyl-homoserine-lactone synthase (216 aa).

It belongs to the autoinducer synthase family.

It catalyses the reaction a fatty acyl-[ACP] + S-adenosyl-L-methionine = an N-acyl-L-homoserine lactone + S-methyl-5'-thioadenosine + holo-[ACP] + H(+). Functionally, required for the synthesis of OHHL (N-(3-oxohexanoyl)-L-homoserine lactone), an autoinducer molecule which binds to CarR and thus acts in the control of the biosynthesis of carbapenem antibiotics. The sequence is that of Acyl-homoserine-lactone synthase (carI) from Pectobacterium carotovorum subsp. carotovorum (Erwinia carotovora subsp. carotovora).